The sequence spans 496 residues: Cyclin-L1 (496 aa).

Cyclin-like regions lie at residues 68 to 170 and 183 to 267; these read ELIQ…RILK and KIIV…TTLR. The interval 301 to 496 is disordered; the sequence is NPDGTPAILS…SHSGHGRHRR (196 aa). The span at 322–347 shows a compositional bias: basic and acidic residues; it reads SPRDVKTEEKSPNFAKVKREMDDKQS. 4 stretches are compositionally biased toward basic residues: residues 358 to 392, 412 to 426, 434 to 446, and 456 to 468; these read ENKR…RRSR, RRHH…KLKH, RHAH…HSPS, and KKHR…HRER. The RS stretch occupies residues 363–406; it reads RSVSRSRSRTKSRSRSHSPRRHYNNRRRSRSGTYSSRSRSRSRS. The span at 469–478 shows a compositional bias: basic and acidic residues; that stretch reads RERSRSFERS. Over residues 479–496 the composition is skewed to basic residues; it reads HKNKHHGSSHSGHGRHRR.

This sequence belongs to the cyclin family. Cyclin L subfamily.

It is found in the nucleus speckle. The protein localises to the nucleus. It localises to the nucleoplasm. Involved in pre-mRNA splicing. This Xenopus laevis (African clawed frog) protein is Cyclin-L1 (ccnl1).